An 81-amino-acid polypeptide reads, in one-letter code: MNDVFSTAQHKLDALGLRCPEPVMMVRKTVRQMAQGETLLIIADDPATTRDIPSFCEFMDHTLVASETSQTPYQYLIKKGL.

Cysteine 19 functions as the Cysteine persulfide intermediate in the catalytic mechanism.

This sequence belongs to the sulfur carrier protein TusA family.

It localises to the cytoplasm. Sulfur carrier protein which probably makes part of a sulfur-relay system. This is Sulfur carrier protein TusA from Shewanella sp. (strain ANA-3).